The primary structure comprises 367 residues: Probable peptidoglycan glycosyltransferase FtsW (367 aa).

Residues 1–8 (MRRVEGYD) are Cytoplasmic-facing. The chain crosses the membrane as a helical span at residues 9-29 (MIVLMMAVILTCFGVVMVYSA). At 30-49 (SSVMAAKKFHDGFFFLKRQS) the chain is on the periplasmic side. Residues 50 to 70 (LYALIGFIGMGVAMHVDYHVW) traverse the membrane as a helical segment. The Cytoplasmic portion of the chain corresponds to 71–72 (KK). A helical membrane pass occupies residues 73-93 (WAVPLFLGTFFLLLLVFVPGI). Residues 94 to 138 (GGTAKGASRWIRLPGFNFQPSELAKVALIMYMAYSLEKRQDKLKQ) lie on the Periplasmic side of the membrane. The chain crosses the membrane as a helical span at residues 139 to 159 (FMSGFFPYMLILGVFIAVLLA). The Cytoplasmic segment spans residues 160 to 161 (QH). Residues 162–182 (DMGAALTMLAVAIVMLFAAGT) form a helical membrane-spanning segment. A topological domain (periplasmic) is located at residue K183. A helical membrane pass occupies residues 184 to 204 (VQYILGMGLVALPGICYLVFT). Residues 205–225 (KAYRMRRITAFLDPWQDPTDA) lie on the Cytoplasmic side of the membrane. The helical transmembrane segment at 226-246 (GFQIIQSWLALGTGGFFGQGL) threads the bilayer. Residues 247-266 (GEGKQKLFYLPEAHTDFILS) lie on the Periplasmic side of the membrane. The chain crosses the membrane as a helical span at residues 267-287 (VLGEEMGFIGVVVIASMFLLL). Topologically, residues 288 to 304 (VQRSIRVAIAAEDSFGR) are cytoplasmic. Residues 305–325 (FLAFGIAILLGLEAFVNMAVV) form a helical membrane-spanning segment. The Periplasmic segment spans residues 326–335 (TGLLPTKGIA). Residues 336–356 (LPFLSYGGSSLIISLCSVGVL) form a helical membrane-spanning segment. Topologically, residues 357-367 (LNVSTRMRGAA) are cytoplasmic.

It belongs to the SEDS family. FtsW subfamily.

It localises to the cell inner membrane. It catalyses the reaction [GlcNAc-(1-&gt;4)-Mur2Ac(oyl-L-Ala-gamma-D-Glu-L-Lys-D-Ala-D-Ala)](n)-di-trans,octa-cis-undecaprenyl diphosphate + beta-D-GlcNAc-(1-&gt;4)-Mur2Ac(oyl-L-Ala-gamma-D-Glu-L-Lys-D-Ala-D-Ala)-di-trans,octa-cis-undecaprenyl diphosphate = [GlcNAc-(1-&gt;4)-Mur2Ac(oyl-L-Ala-gamma-D-Glu-L-Lys-D-Ala-D-Ala)](n+1)-di-trans,octa-cis-undecaprenyl diphosphate + di-trans,octa-cis-undecaprenyl diphosphate + H(+). The protein operates within cell wall biogenesis; peptidoglycan biosynthesis. In terms of biological role, peptidoglycan polymerase that is essential for cell division. The protein is Probable peptidoglycan glycosyltransferase FtsW of Geobacter sp. (strain M18).